Here is a 595-residue protein sequence, read N- to C-terminus: Estrogen receptor (595 aa).

The segment at 1–184 (MTMTLHTKAS…AMESVKETRY (184 aa)) is modulating(transactivation AF-1); mediates interaction with MACROD1. Ser10 carries O-linked (GlcNAc) serine glycosylation. A required for interaction with NCOA1 region spans residues 35-47 (LERALSEVYVDSS). Positions 35–174 (LERALSEVYV…LSSSSEKGSM (140 aa)) are interaction with DDX5; self-association. A phosphoserine; by CDK2 mark is found at Ser103 and Ser105. Ser118 bears the Phosphoserine mark. The interval 143-174 (DSGPPAFYRSNSDNRRQSGRERLSSSSEKGSM) is disordered. The segment covering 154–165 (SDNRRQSGRERL) has biased composition (basic and acidic residues). Residue Ser167 is modified to Phosphoserine; by CK2. NR C4-type zinc fingers lie at residues 185–205 (CAVCNDYASGYHYGVWSCEGC) and 221–245 (CPATNQCTIDKNRRKSCQACRLRKC). A DNA-binding region (nuclear receptor) is located at residues 185-250 (CAVCNDYASG…RLRKCYEVGM (66 aa)). A mediates interaction with DNTTIP2 region spans residues 185–310 (CAVCNDYASG…TKKNSPALSL (126 aa)). The tract at residues 251-310 (MKGGIRKDRRGGRMLKHKRQRDDLEGRNDMGPSGDMRATNLWPSPLVIKHTKKNSPALSL) is hinge. Arg260 carries the asymmetric dimethylarginine; by PRMT1 modification. Over residues 260-269 (RGGRMLKHKR) the composition is skewed to basic residues. The disordered stretch occupies residues 260 to 285 (RGGRMLKHKRQRDDLEGRNDMGPSGD). An interaction with AKAP13 region spans residues 262–595 (GRMLKHKRQR…SEAESFPNTI (334 aa)). The segment at 264–595 (MLKHKRQRDD…SEAESFPNTI (332 aa)) is self-association. The 237-residue stretch at 311–547 (TADQMVSALL…DLLLEMLDAH (237 aa)) folds into the NR LBD domain. The segment at 311-595 (TADQMVSALL…SEAESFPNTI (285 aa)) is transactivation AF-2. 17beta-estradiol contacts are provided by Glu353 and Arg394. A lipid anchor (S-palmitoyl cysteine) is attached at Cys447. Residue His524 coordinates 17beta-estradiol. Phosphotyrosine; by Tyr-kinases is present on Tyr537. Residues 554–578 (SRMGVSPEEPSQSQLTTTNSTSSHS) are disordered. A compositionally biased stretch (low complexity) spans 564 to 578 (SQSQLTTTNSTSSHS). The O-linked (GlcNAc) threonine glycan is linked to Thr571.

The protein belongs to the nuclear hormone receptor family. NR3 subfamily. As to quaternary structure, binds DNA as a homodimer. Can form a heterodimer with ESR2. Interacts with coactivator NCOA5. Interacts with PELP1, the interaction is enhanced by 17-beta-estradiol; the interaction increases ESR1 transcriptional activity. Interacts with NCOA7; the interaction is ligand-inducible. Interacts with AKAP13, CUEDC2, HEXIM1, KDM5A, MAP1S, SMARD1, and UBE1C. Interacts with MUC1; the interaction is stimulated by 7 beta-estradiol (E2) and enhances ESR1-mediated transcription. Interacts with DNTTIP2, and UIMC1. Interacts with KMT2D/MLL2. Interacts with ATAD2; the interaction is enhanced by estradiol. Interacts with KIF18A and LDB1. Interacts with RLIM (via its C-terminus). Interacts with MACROD1. Interacts with SH2D4A and PLCG. Interacts with SH2D4A; the interaction blocks binding to PLCG and inhibits estrogen-induced cell proliferation. Interacts with DYNLL1. Interacts with CCDC62; the interaction requires estradiol and appears to enhance the transcription of target genes. Interacts with NR2C1; the interaction prevents homodimerization of ESR1 and suppresses its transcriptional activity and cell growth. Interacts with DNAAF4. Interacts with PRMT2. Interacts with RBFOX2. Interacts with EP300; the interaction is estrogen-dependent and enhanced by CITED1. Interacts with CITED1; the interaction is estrogen-dependent. Interacts with FAM120B, FOXL2, PHB2 and SLC30A9. Interacts with coactivators NCOA3 and NCOA6. Interacts with STK3/MST2 only in the presence of SAV1 and vice-versa. Binds to CSNK1D. Interacts with NCOA2; NCOA2 can interact with ESR1 AF-1 and AF-2 domains simultaneously and mediate their transcriptional synergy. Interacts with DDX5. Interacts with NCOA1; the interaction seems to require a self-association of N-terminal and C-terminal regions. Interacts with ZNF366, DDX17, NFKB1, RELA, SP1 and SP3. Interacts with NRIP1. Interacts with GPER1; the interaction occurs in an estrogen-dependent manner. Interacts with CLOCK and the interaction is stimulated by estrogen. Interacts with TRIP4 (ufmylated); estrogen dependent. Interacts with LMTK3; the interaction phosphorylates ESR1 (in vitro) and protects it against proteasomal degradation. Interacts with CCAR2 (via N-terminus) in a ligand-independent manner. Interacts with ZFHX3. Interacts with SFR1 in a ligand-dependent and -independent manner. Interacts with DCAF13, LATS1 and DCAF1; regulates ESR1 ubiquitination and ubiquitin-mediated proteasomal degradation. Interacts (via DNA-binding domain) with POU4F2 (C-terminus); this interaction increases the estrogen receptor ESR1 transcriptional activity in a DNA- and ligand 17-beta-estradiol-independent manner. Interacts with ESRRB isoform 1. Interacts with UBE3A and WBP2. Interacts with GTF2B. Interacts with RBM39. In the absence of hormonal ligand, interacts with TACC1. Interacts with PI3KR1 or PI3KR2 and PTK2/FAK1. Interacts with SRC. Interacts with BAG1; the interaction is promoted in the absence of estradiol (17-beta-estradiol/E2). Interacts with and ubiquitinated by STUB1; the interaction is promoted in the absence of estradiol (17-beta-estradiol/E2). Interacts with NEDD8. Ubiquitinated; regulated by LATS1 via DCAF1 it leads to ESR1 proteasomal degradation. Deubiquitinated by OTUB1. Ubiquitinated by STUB1/CHIP; in the CA1 hippocampal region following loss of endogenous circulating estradiol (17-beta-estradiol/E2). Ubiquitinated by UBR5, leading to its degradation: UBR5 specifically recognizes and binds ligand-bound ESR1 when it is not associated with coactivators (NCOAs). In presence of NCOAs, the UBR5-degron is not accessible, preventing its ubiquitination and degradation. In terms of processing, phosphorylated by cyclin A/CDK2 and CK1. Phosphorylation probably enhances transcriptional activity. Dephosphorylation at Ser-118 by PPP5C inhibits its transactivation activity. Phosphorylated by LMTK3 (in vitro). Post-translationally, palmitoylated at Cys-447 by ZDHHC7 and ZDHHC21. Palmitoylation is required for plasma membrane targeting and for rapid intracellular signaling via ERK and AKT kinases and cAMP generation, but not for signaling mediated by the nuclear hormone receptor. Dimethylated by PRMT1 at Arg-260. The methylation may favor cytoplasmic localization. Demethylated by JMJD6 at Arg-260.

The protein resides in the nucleus. It is found in the cytoplasm. It localises to the golgi apparatus. Its subcellular location is the cell membrane. In terms of biological role, nuclear hormone receptor. The steroid hormones and their receptors are involved in the regulation of eukaryotic gene expression and affect cellular proliferation and differentiation in target tissues. Ligand-dependent nuclear transactivation involves either direct homodimer binding to a palindromic estrogen response element (ERE) sequence or association with other DNA-binding transcription factors, such as AP-1/c-Jun, c-Fos, ATF-2, Sp1 and Sp3, to mediate ERE-independent signaling. Ligand binding induces a conformational change allowing subsequent or combinatorial association with multiprotein coactivator complexes through LXXLL motifs of their respective components. Mutual transrepression occurs between the estrogen receptor (ER) and NF-kappa-B in a cell-type specific manner. Decreases NF-kappa-B DNA-binding activity and inhibits NF-kappa-B-mediated transcription from the IL6 promoter and displace RELA/p65 and associated coregulators from the promoter. Recruited to the NF-kappa-B response element of the CCL2 and IL8 promoters and can displace CREBBP. Present with NF-kappa-B components RELA/p65 and NFKB1/p50 on ERE sequences. Can also act synergistically with NF-kappa-B to activate transcription involving respective recruitment adjacent response elements; the function involves CREBBP. Can activate the transcriptional activity of TFF1. Also mediates membrane-initiated estrogen signaling involving various kinase cascades. Essential for MTA1-mediated transcriptional regulation of BRCA1 and BCAS3. Maintains neuronal survival in response to ischemic reperfusion injury when in the presence of circulating estradiol (17-beta-estradiol/E2). This chain is Estrogen receptor (ESR1), found in Mesocricetus auratus (Golden hamster).